The sequence spans 208 residues: Small ribosomal subunit protein uS2 (208 aa).

This sequence belongs to the universal ribosomal protein uS2 family.

This chain is Small ribosomal subunit protein uS2, found in Pyrobaculum calidifontis (strain DSM 21063 / JCM 11548 / VA1).